The chain runs to 414 residues: Lysosome-associated membrane glycoprotein 1 (414 aa).

An N-terminal signal peptide occupies residues 1 to 18 (MGGAARAVLLGFLQASSS). Positions 19 to 181 (FDVRDSTGKV…SANKTECRED (163 aa)) are first lumenal domain. Residues 19 to 379 (FDVRDSTGKV…EECQLDENNM (361 aa)) lie on the Lumenal side of the membrane. Residues Cys-29 and Cys-67 are joined by a disulfide bond. Residues Asn-33, Asn-58, Asn-71, Asn-90, Asn-108, Asn-117, Asn-154, Asn-159, Asn-168, and Asn-174 are each glycosylated (N-linked (GlcNAc...) asparagine). Cys-142 and Cys-178 are oxidised to a cystine. The hinge stretch occupies residues 182-224 (MVSTTTVAPTTPKHATSQVPTTSPAPTAAPSSPAVGKYNVTGA). Positions 186 to 213 (TTVAPTTPKHATSQVPTTSPAPTAAPSS) are disordered. The span at 196–213 (ATSQVPTTSPAPTAAPSS) shows a compositional bias: low complexity. Residues Asn-220, Asn-225, Asn-238, Asn-259, Asn-289, Asn-301, and Asn-319 are each glycosylated (N-linked (GlcNAc...) asparagine). The segment at 225 to 379 (NGTCVLASMG…EECQLDENNM (155 aa)) is second lumenal domain. Cys-228 and Cys-266 form a disulfide bridge. A disulfide bridge connects residues Cys-335 and Cys-372. The helical transmembrane segment at 380–403 (LIPIIVGAALAGLVLIVLIAYLIG) threads the bilayer. Over 404–414 (RKRSHAGYQTI) the chain is Cytoplasmic.

The protein belongs to the LAMP family.

The protein localises to the lysosome membrane. Its subcellular location is the endosome membrane. It is found in the late endosome membrane. It localises to the cell membrane. The protein resides in the cytolytic granule membrane. Its function is as follows. Lysosomal membrane glycoprotein which plays an important role in lysosome biogenesis, lysosomal pH regulation, autophagy and cholesterol homeostasis. Functionally, (Microbial infection) Plays an essential role in efficient replication and spread of Marek's disease virus, by facilitating viral cell-to-cell spread. The chain is Lysosome-associated membrane glycoprotein 1 (LAMP1) from Gallus gallus (Chicken).